The following is a 102-amino-acid chain: Large ribosomal subunit protein bL21 (102 aa).

Belongs to the bacterial ribosomal protein bL21 family. In terms of assembly, part of the 50S ribosomal subunit. Contacts protein L20.

This protein binds to 23S rRNA in the presence of protein L20. The sequence is that of Large ribosomal subunit protein bL21 from Bacillus pumilus (strain SAFR-032).